The sequence spans 102 residues: Small ribosomal subunit protein uS10 (102 aa).

The protein belongs to the universal ribosomal protein uS10 family. As to quaternary structure, part of the 30S ribosomal subunit.

Its function is as follows. Involved in the binding of tRNA to the ribosomes. This Thermoanaerobacter pseudethanolicus (strain ATCC 33223 / 39E) (Clostridium thermohydrosulfuricum) protein is Small ribosomal subunit protein uS10.